The sequence spans 862 residues: MYRRTTLWFLLLFQPILVFAQNRTELYECKIGTVNPLASTSLNACFKLYNTPKSFQAARRYCVSLGGQLADKINKDDSSLYSANADLEVANSTKFWVGASNLKCNIAWENGGEIEFNDMWAPESRYYGVAIDKMSIGGLWHTVPVGQKLPFVCTFQGKSNEAGPAPVHAMRAPAKKRVPKVEKPEEKDIDESLNAALSDKKEKKEVASDKKKESKKDEEDINESMNAALSDERKKSASLASSDKKESSKKDESSDEANLSASQVANAEMSASISASSANSSSDESSDEAYDSAEIEMRKKIGKTVIAMKSQEMASQSDDYDKYTEEDLLSAAASLIGGYILNAHWADSRTTNTSSFDSQTDEETLNMMMAIAEQIAMTMRSSKRRESSSSNTDSESASISESSQASEQAVMAAAMSAKSSKKSESSSKDESEDSASLNLEQKASAAASAALASKSKSDSSDQSKDQKSANVALAVVSENKHPTKKPEDPKSTKTTTEEPDIDESLNAALANQRSTTTKNSDLTTIITTVKPNALPIAIVAKQSEKDPACPAEWTQFNTNATAPALCFKRYEKPMNFEDARLFCVGKGGHLASIHNERQLLLLSALLHNNGPDALSDQTWIGLNRIHQKYYVYEDETAMDFTRWLPGAPNINDCTVFTGNELPNYPHKGTQYKFGDFPCEEVQKSVLCEVTLGKDKLKSQTTCQDGWSYYSHDGTAKNGKCYKRIDQSKKFSEAREVCKVENSYVASVQNEGEARFVSALVQTEKNYTVDEQTWIGYVKYDRDFGWEDGNKGLQFDPWTEKMPRQKKCTVFTGNEIHENCRSQFRFVSVDCNKTQRSVLCSKPPMKNGTPFVYKDTDNSSKKI.

The first 20 residues, 1 to 20 (MYRRTTLWFLLLFQPILVFA), serve as a signal peptide directing secretion. 2 N-linked (GlcNAc...) asparagine glycosylation sites follow: N22 and N91. One can recognise a C-type lectin 1 domain in the interval 41–154 (SLNACFKLYN…VGQKLPFVCT (114 aa)). A disulfide bridge connects residues C62 and C153. The segment at 162-291 (AGPAPVHAMR…SDESSDEAYD (130 aa)) is disordered. The segment covering 198–218 (SDKKEKKEVASDKKKESKKDE) has biased composition (basic and acidic residues). N-linked (GlcNAc...) asparagine glycosylation is present at N222. A compositionally biased stretch (basic and acidic residues) spans 242 to 252 (SDKKESSKKDE). N-linked (GlcNAc...) asparagine glycosylation is found at N258, N279, and N352. Low complexity predominate over residues 265-283 (ANAEMSASISASSANSSSD). 3 disordered regions span residues 377–437 (MTMR…SASL), 450–469 (ALAS…QKSA), and 474–504 (AVVS…IDES). Over residues 388–418 (SSSNTDSESASISESSQASEQAVMAAAMSAK) the composition is skewed to low complexity. 2 stretches are compositionally biased toward basic and acidic residues: residues 455–467 (SKSD…KDQK) and 478–491 (ENKH…DPKS). N-linked (GlcNAc...) asparagine glycosylation occurs at N559. 2 consecutive C-type lectin domains span residues 562–687 (APAL…SVLC) and 716–828 (KNGK…FVSV). A disulfide bridge connects residues C653 and C678. The N-linked (GlcNAc...) asparagine glycan is linked to N765. A disulfide bridge connects residues C807 and C819. N-linked (GlcNAc...) asparagine glycosylation is found at N831 and N857.

The protein resides in the secreted. The protein is C-type lectin domain-containing protein 161 (clec-161) of Caenorhabditis elegans.